We begin with the raw amino-acid sequence, 369 residues long: Polycomb group protein FERTILIZATION-INDEPENDENT ENDOSPERM (369 aa).

WD repeat units lie at residues 31–73, 81–123, 126–166, 172–212, 238–275, 287–328, and 335–368; these read EGKK…AISA, DKEE…IHKS, GHGD…CILI, GHRY…TYVE, IHTNYVDCNRWFGDFILSKSVDNEILLWEPQLKENSPG, VPMC…PVLI, and QSKSVIRQTAMSVDGSTILACCEDGTIWRWDVIT.

Belongs to the WD repeat ESC family. As to quaternary structure, interacts directly with MEA. These two proteins are probably indirectly associated with FIS2. In plants, PcG complexes are probably composed of a member of the EZ family (CLF or MEA), FIE, and a member of the VEFS family (FIS2, VRN2 or EMF2). Component of the plant homeodomain / polycomb repressive complex 2 (PHD-PRC2) large complex during prolonged cold, composed of core PRC2 components (VRN2, EZA1, FIE and MSI1), and three related PHD finger proteins (VIL1, VIL2 and VIN3) that mediates histone H3 trimethylation on 'Lys-27' (H3K27me3). Binds to ALP1. As to expression, expressed in cauline leaves, root and stems. In the male reproductive organ, it is expressed in the developing anther; and is abundant in microspore mother cells, in microsporocytes and in the tapetum, but is absent from vascular bundles, the connective tissue and the filament. It is also absent from pollen grains at subsequent developmental stages. In the developing female reproductive organs, it is highly expressed in all cells of the young ovules primordium before archesporial differentiation. Then, it is highly expressed in the ovule sporophytic tissue and the megaspore mother cell before meiosis, but is absent from placenta or the developing carpel. Then, it decreases.

The protein localises to the nucleus. Polycomb group (PcG) protein. PcG proteins act by forming multiprotein complexes, which are required to maintain the transcriptionally repressive state of homeotic genes throughout development. PcG proteins are not required to initiate repression, but to maintain it during later stages of development. They probably act via the methylation of histones, rendering chromatin heritably changed in its expressibility. Required to prevent the proliferation of the central cell by repressing unknown target genes before fertilization. Probably also involved in floral repression mechanism established during early plant development. Regulates the anteroposterior organization of the endosperm. Interacts with the promoter and represses the transcription of genes such as PHE1, that are paternally active and maternally silenced. The sequence is that of Polycomb group protein FERTILIZATION-INDEPENDENT ENDOSPERM (FIE) from Arabidopsis thaliana (Mouse-ear cress).